Reading from the N-terminus, the 380-residue chain is Erythronate-4-phosphate dehydrogenase (380 aa).

Substrate contacts are provided by Ser45 and Thr66. Residues Asp146 and Thr174 each coordinate NAD(+). The active site involves Arg207. Asp231 serves as a coordination point for NAD(+). Residue Glu236 is part of the active site. His253 serves as the catalytic Proton donor. NAD(+) is bound at residue Gly256. Tyr257 serves as a coordination point for substrate.

The protein belongs to the D-isomer specific 2-hydroxyacid dehydrogenase family. PdxB subfamily. Homodimer.

The protein localises to the cytoplasm. It catalyses the reaction 4-phospho-D-erythronate + NAD(+) = (R)-3-hydroxy-2-oxo-4-phosphooxybutanoate + NADH + H(+). Its pathway is cofactor biosynthesis; pyridoxine 5'-phosphate biosynthesis; pyridoxine 5'-phosphate from D-erythrose 4-phosphate: step 2/5. Catalyzes the oxidation of erythronate-4-phosphate to 3-hydroxy-2-oxo-4-phosphonooxybutanoate. The chain is Erythronate-4-phosphate dehydrogenase from Pseudomonas fluorescens (strain Pf0-1).